A 248-amino-acid polypeptide reads, in one-letter code: Protein maestro (248 aa).

Residues 1 to 20 (MDQRQRRILGQPLSIPTSQP) are disordered. HEAT repeat units follow at residues 44–79 (EPLK…AREA) and 128–163 (SFFI…AAFA).

It is found in the nucleus. The protein resides in the nucleolus. The protein is Protein maestro (MRO) of Macaca fascicularis (Crab-eating macaque).